A 136-amino-acid chain; its full sequence is Holo-[acyl-carrier-protein] synthase (136 aa).

2 residues coordinate Mg(2+): Asp-8 and Glu-57.

Belongs to the P-Pant transferase superfamily. AcpS family. Mg(2+) serves as cofactor.

The protein resides in the cytoplasm. It catalyses the reaction apo-[ACP] + CoA = holo-[ACP] + adenosine 3',5'-bisphosphate + H(+). Functionally, transfers the 4'-phosphopantetheine moiety from coenzyme A to a Ser of acyl-carrier-protein. This Methylorubrum extorquens (strain PA1) (Methylobacterium extorquens) protein is Holo-[acyl-carrier-protein] synthase.